A 176-amino-acid chain; its full sequence is MTTILSVRLKNKVVIGGDGQATLGNTIMKSNVKKIRTLYHEKVIAGFAGGTADAFTLFEMFEKKLAMYQGQLPRAAIELAKDWRSDRMLRKLEALLAVADKDTSLIITGNGDVIQPEDDLIAIGSGGSYAQSAARALINNTTLNADEIVEKSLNIAANICIYTNHSFTIKELFSEK.

Threonine 2 is a catalytic residue. Alanine 157, cysteine 160, and threonine 163 together coordinate Na(+).

The protein belongs to the peptidase T1B family. HslV subfamily. In terms of assembly, a double ring-shaped homohexamer of HslV is capped on each side by a ring-shaped HslU homohexamer. The assembly of the HslU/HslV complex is dependent on binding of ATP.

It is found in the cytoplasm. The catalysed reaction is ATP-dependent cleavage of peptide bonds with broad specificity.. Its activity is regulated as follows. Allosterically activated by HslU binding. Its function is as follows. Protease subunit of a proteasome-like degradation complex believed to be a general protein degrading machinery. The protein is ATP-dependent protease subunit HslV of Buchnera aphidicola subsp. Schizaphis graminum (strain Sg).